Consider the following 214-residue polypeptide: Endothelin-3 (214 aa).

The first 16 residues, 1 to 16 (MEPGLWLLLGLTVTSA), serve as a signal peptide directing secretion. The propeptide occupies 17 to 94 (AGLVPCPQSG…DKGLPAHHRP (78 aa)). Residues 24–91 (QSGDSGRASV…KQEDKGLPAH (68 aa)) form a disordered region. The span at 25-35 (SGDSGRASVSQ) shows a compositional bias: polar residues. Cystine bridges form between C97-C111 and C99-C107. The propeptide occupies 118-214 (INTPEQTVPY…MSRTDKAHRP (97 aa)). Positions 159–173 (CTCMGADDKACAHFC) are endothelin-like. A disordered region spans residues 183-214 (SGRAERPAAEEMRETGGPRQRLMSRTDKAHRP). Basic and acidic residues predominate over residues 185–198 (RAERPAAEEMRETG).

This sequence belongs to the endothelin/sarafotoxin family.

It localises to the secreted. Its function is as follows. Endothelins are endothelium-derived vasoconstrictor peptides. This Mus musculus (Mouse) protein is Endothelin-3 (Edn3).